Here is a 466-residue protein sequence, read N- to C-terminus: Dynein axonemal assembly factor 11 (466 aa).

LRR repeat units lie at residues 22-43, 45-66, 67-88, and 89-110; these read SLEE…DKWC, DLKI…SKLK, KLEY…EGCE, and ELAK…KNLQ. The LRRCT domain maps to 123–161; that stretch reads NPCASFDHYREFVVATLPQLKWLDGKEIEPSERIKALQD. Positions 178-204 form a coiled coil; it reads LKRAKLKEEAQRKHQEEDKNEDKRSNA. Over residues 185 to 202 the composition is skewed to basic and acidic residues; it reads EEAQRKHQEEDKNEDKRS. 3 disordered regions span residues 185-206, 268-288, and 391-466; these read EEAQ…NAGF, MEKQ…VKPP, and AFKS…PPLI. Positions 269–287 are enriched in basic residues; the sequence is EKQRKKQEKLSEKKKKVKP. The 96-residue stretch at 301–396 folds into the CS domain; sequence VNEPKIDFSL…GGQRAFKSMK (96 aa). Basic and acidic residues-rich tracts occupy residues 398–425 and 433–445; these read TSDR…KHSF and QEKK…RPEP. Over residues 450–460 the composition is skewed to acidic residues; it reads SEEDPTFEDNP.

This sequence belongs to the tilB family. As to quaternary structure, interacts (via CS domain) with ZMYND10 (via C-terminus). Expressed predominantly in testis and in nasal epithelial cells.

It localises to the cytoplasm. The protein resides in the cell projection. The protein localises to the cilium. Its subcellular location is the dynein axonemal particle. It is found in the flagellum. Its function is as follows. Involved in dynein arm assembly, is important for expression and transporting outer dynein arm (ODA) proteins from the cytoplasm to the cilia. Acts as a crucial component in the formation and motility of spermatozoal flagella. The chain is Dynein axonemal assembly factor 11 from Homo sapiens (Human).